Reading from the N-terminus, the 146-residue chain is Acidic phospholipase A2 S5-32M (146 aa).

The N-terminal stretch at 1–19 is a signal peptide; sequence MYPAHLLVLLAVCVSLLGA. A propeptide spanning residues 20–27 is cleaved from the precursor; it reads ASIPPQPL. Disulfide bonds link Cys-38/Cys-98, Cys-54/Cys-145, Cys-56/Cys-72, Cys-71/Cys-126, Cys-78/Cys-119, Cys-87/Cys-112, and Cys-105/Cys-117. The Ca(2+) site is built by Tyr-55, Gly-57, and Gly-59. His-75 is a catalytic residue. Residue Asp-76 coordinates Ca(2+). Asp-120 is an active-site residue.

This sequence belongs to the phospholipase A2 family. Group I subfamily. D49 sub-subfamily. Requires Ca(2+) as cofactor. In terms of tissue distribution, expressed by the venom gland.

Its subcellular location is the secreted. It catalyses the reaction a 1,2-diacyl-sn-glycero-3-phosphocholine + H2O = a 1-acyl-sn-glycero-3-phosphocholine + a fatty acid + H(+). Snake venom phospholipase A2 (PLA2) that inhibits collagen-induced platelet aggregation. PLA2 catalyzes the calcium-dependent hydrolysis of the 2-acyl groups in 3-sn-phosphoglycerides. This is Acidic phospholipase A2 S5-32M from Austrelaps superbus (Lowland copperhead snake).